We begin with the raw amino-acid sequence, 588 residues long: Transmembrane protein 201 homolog (588 aa).

Topologically, residues 1 to 212 (MEVAAAVGVI…FFFAGGSTCE (212 aa)) are nuclear. Residues 213 to 233 (ALHFGCLISSIILFLANIDFL) traverse the membrane as a helical segment. The Perinuclear space portion of the chain corresponds to 234–254 (QQDAGASLINLPKALQDILPE). A helical membrane pass occupies residues 255–275 (VYKYSFVINFLIFTTHLIAAF). Residues 276-280 (NNKCR) lie on the Nuclear side of the membrane. A helical transmembrane segment spans residues 281-301 (VTLPDLLLPILLILAMLTVLT). The Perinuclear space segment spans residues 302–309 (SSDNLSQD). Residues 310–330 (VALVRGACASFSTILSMAVTL) traverse the membrane as a helical segment. Residues 331-564 (LPRKKLHKKR…SGAWQCRVIG (234 aa)) lie on the Nuclear side of the membrane. The interval 378 to 457 (RRSPHTPSAS…QSTRSSHFKP (80 aa)) is disordered. Low complexity predominate over residues 384–396 (PSASPPAMNSSPP). Composition is skewed to polar residues over residues 418–430 (NMQS…NNHV) and 441–452 (MAAQSVAQSTRS). A helical transmembrane segment spans residues 565–585 (ILFALVFIVLIMQIGLFYVLF). The Perinuclear space segment spans residues 586–588 (TRN).

This sequence belongs to the TMEM201 family.

It is found in the nucleus inner membrane. Its function is as follows. Plays a role in nuclear migration in hypodermal cells. This is Transmembrane protein 201 homolog from Caenorhabditis elegans.